The chain runs to 422 residues: Probable glycosidase CRR1 (422 aa).

The signal sequence occupies residues 1–20; it reads MRISILQLVPVVGYIGFALG. The region spanning 67–339 is the GH16 domain; sequence DEESCAPIPA…WENSPDIIEK (273 aa). Glu217 (nucleophile) is an active-site residue. The active-site Proton donor is the Glu221.

Belongs to the glycosyl hydrolase 16 family. CRR1 subfamily.

The protein localises to the spore wall. Its function is as follows. Spore specific glycosidase involved in spore wall assembly during sporulation. May be involved in copper import. This Saccharomyces cerevisiae (strain ATCC 204508 / S288c) (Baker's yeast) protein is Probable glycosidase CRR1 (CRR1).